Reading from the N-terminus, the 290-residue chain is Elongation factor Ts (290 aa).

The interval 81-84 (TDFV) is involved in Mg(2+) ion dislocation from EF-Tu.

Belongs to the EF-Ts family.

The protein localises to the cytoplasm. Its function is as follows. Associates with the EF-Tu.GDP complex and induces the exchange of GDP to GTP. It remains bound to the aminoacyl-tRNA.EF-Tu.GTP complex up to the GTP hydrolysis stage on the ribosome. The polypeptide is Elongation factor Ts (Vesicomyosocius okutanii subsp. Calyptogena okutanii (strain HA)).